We begin with the raw amino-acid sequence, 2124 residues long: Genome polyprotein (2124 aa).

Gly-2 is lipidated: N-myristoyl glycine; by host. Residues 873–880 (VARDLLLI) form a host EIF4E binding region. The SF3 helicase domain occupies 1102–1264 (VQIATYFRNF…SAATKNGKLD (163 aa)). 1130–1137 (GKPGVGKS) serves as a coordination point for ATP. Residues 1415–1437 (DKPKEEEEEPEEKKEKKTEESKE) show a composition bias toward basic and acidic residues. The disordered stretch occupies residues 1415–1446 (DKPKEEEEEPEEKKEKKTEESKEAAGPYNGPT). Residue Tyr-1442 is modified to O-(5'-phospho-RNA)-tyrosine. The region spanning 1459-1648 (SPLMDMEKKI…VGTRLTARMI (190 aa)) is the Peptidase C3 domain. Catalysis depends on for protease 3C activity residues His-1501, Asp-1535, and Cys-1612. One can recognise a RdRp catalytic domain in the interval 1893 to 2011 (PYLYDFDYSN…ASKFELDLVM (119 aa)). Residues Asp-1899 and Asp-1997 each act as for RdRp activity in the active site.

This sequence belongs to the picornaviruses polyprotein family. In terms of assembly, interacts with host EIF4E. As to quaternary structure, interacts with host IFIH1/MDA5; this interaction inhibits the induction of the IFN-beta signal pathway. Post-translationally, specific enzymatic cleavages by the viral protease in vivo yield a variety of precursors and mature proteins. The polyprotein seems to be cotranslationally cleaved at the 2A/2B junction by a ribosomal skip from one codon to the next without formation of a peptide bond. This process would release the P1-2A peptide from the translational complex. In terms of processing, during virion maturation, immature virions are rendered infectious following cleavage of VP0 into VP4 and VP2. This maturation seems to be an autocatalytic event triggered by the presence of RNA in the capsid and is followed by a conformational change of the particle. Myristoylation is required during RNA encapsidation and formation of the mature virus particle. Post-translationally, uridylylated by the polymerase and is covalently linked to the 5'-end of genomic RNA. This uridylylated form acts as a nucleotide-peptide primer for the polymerase.

The protein resides in the virion. Its subcellular location is the host cytoplasm. It is found in the host nucleus. The protein localises to the host nucleolus. It localises to the host cytoplasmic vesicle membrane. It carries out the reaction RNA(n) + a ribonucleoside 5'-triphosphate = RNA(n+1) + diphosphate. The enzyme catalyses ATP + H2O = ADP + phosphate + H(+). It catalyses the reaction Selective cleavage of Gln-|-Gly bond in the poliovirus polyprotein. In other picornavirus reactions Glu may be substituted for Gln, and Ser or Thr for Gly.. Functionally, forms an icosahedral capsid of pseudo T=3 symmetry with capsid proteins VP2 and VP3. Together they form an icosahedral capsid composed of 60 copies of each VP1, VP2, and VP3, with a diameter of approximately 300 Angstroms. VP4 lies on the inner surface of the protein shell formed by VP1, VP2 and VP3. All the three latter proteins contain a beta-sheet structure called beta-barrel jelly roll. VP1 is situated at the 12 fivefold axes, whereas VP2 and VP3 are located at the quasi-sixfold axes. Lies on the inner surface of the capsid shell. After binding to the host receptor, the capsid undergoes conformational changes. Capsid protein VP4 is released, capsid protein VP1 N-terminus is externalized, and together, they shape a pore in the host membrane through which the viral genome is translocated into the host cell cytoplasm. After genome has been released, the channel shrinks. Its function is as follows. VP0 precursor is a component of immature procapsids. In terms of biological role, involved in host translation shutoff by inhibiting cap-dependent mRNA translation. Nuclear localization is required for this function. The resulting inhibition of cellular protein synthesis serves to ensure maximal viral gene expression and to evade host immune response. Functionally, affects membrane integrity and causes an increase in membrane permeability. Associates with and induces structural rearrangements of intracellular membranes. It displays RNA-binding, nucleotide binding and NTPase activities. Interacts with IFIH1/MDA5 to inhibit the induction of the IFN-beta signal pathway. Its function is as follows. Serves as membrane anchor via its hydrophobic domain. In terms of biological role, forms a primer, VPg-pU, which is utilized by the polymerase for the initiation of RNA chains. Functionally, cysteine protease that generates mature viral proteins from the precursor polyprotein. In addition to its proteolytic activity, it binds to viral RNA, and thus influences viral genome replication. RNA and substrate cooperatively bind to the protease. Cleaves host PABP1, this cleavage is important for viral replication. Cleaves host TANK and disrupts the TANK-TBK1-IKKepsilon-IRF3 complex, thereby inhibiting the induction of the IFN-beta signal pathway. Replicates the genomic and antigenomic RNAs by recognizing replications specific signals. Performs VPg uridylylation. The chain is Genome polyprotein from Cosavirus A (isolate Human/Pakistan/0553/-) (HCoSV-A).